Here is a 500-residue protein sequence, read N- to C-terminus: MNSFPWLTIFVGLPISAGFLIFVFPHRGNKVIRWYTIFICVLELLLMTYAFSYYFQLDDPLIQLTESYKWINFFDFYWRLGIDGLSLGPILLTGFITTLATLAARPITRDSRLFHFLMLAMYSGQIGLFSSQNLLLFFIMWELELIPVYLLLAMWGGKQRLYSATKFILYTAGSSVFLLMGALGIAFYASNEPTFNFETSANQSYPVTLEILFYIGFLIAFAVKSPIIPLHTWLPDTHGEAHYSTCMLLAGILLKMGAYGLVRINMELLSHAHSIFSSWLIIVGAIQIIYAASTSSGQKNLKKRIAYSSVSHMGFTIIGICSISDMGLNGAILQIISHGFIGAALFFLSGTSYDRIRLVYLDEMGGMATLMPKIFMMFSILSLASLALPGMSGFFAELVVFFGIITAKKYFLMPKILITFVTAVGTILTPIYLLSMLRQMFYGYKLFNARNSYFFDSGPRELFVSIAILLPVISIGIYPDFVFSLSVDKVEAILSNYFYS.

Helical transmembrane passes span 4–24 (FPWL…IFVF), 35–55 (YTIF…SYYF), 84–104 (GLSL…TLAA), 113–133 (LFHF…SSQN), 134–154 (LLLF…LLAM), 167–187 (FILY…GIAF), 211–231 (ILFY…IPLH), 242–262 (HYST…YGLV), 272–292 (AHSI…IYAA), 305–325 (IAYS…SISD), 330–350 (GAIL…FLSG), 386–406 (LALP…GIIT), 416–436 (ILIT…LLSM), and 463–483 (FVSI…DFVF).

Belongs to the complex I subunit 4 family.

Its subcellular location is the plastid. It is found in the chloroplast thylakoid membrane. It carries out the reaction a plastoquinone + NADH + (n+1) H(+)(in) = a plastoquinol + NAD(+) + n H(+)(out). The enzyme catalyses a plastoquinone + NADPH + (n+1) H(+)(in) = a plastoquinol + NADP(+) + n H(+)(out). The polypeptide is NAD(P)H-quinone oxidoreductase chain 4, chloroplastic (Populus trichocarpa (Western balsam poplar)).